The following is a 137-amino-acid chain: Small ribosomal subunit protein bS16m (137 aa).

A mitochondrion-targeting transit peptide spans 1–34 (MVHLTTLLCKAYRGGHLTIRLALGGCTNRPFYRI). Threonine 130 carries the post-translational modification Phosphothreonine.

It belongs to the bacterial ribosomal protein bS16 family. In terms of assembly, component of the mitochondrial ribosome small subunit (28S) which comprises a 12S rRNA and about 30 distinct proteins.

It is found in the mitochondrion. The polypeptide is Small ribosomal subunit protein bS16m (MRPS16) (Pongo abelii (Sumatran orangutan)).